We begin with the raw amino-acid sequence, 256 residues long: Phosphonates import ATP-binding protein PhnC (256 aa).

In terms of domain architecture, ABC transporter spans 7-251 (IEMKNVTKVY…VFDNIYNGGK (245 aa)). Position 40–47 (40–47 (GLSGAGKS)) interacts with ATP.

Belongs to the ABC transporter superfamily. Phosphonates importer (TC 3.A.1.9.1) family. In terms of assembly, the complex is composed of two ATP-binding proteins (PhnC), two transmembrane proteins (PhnE) and a solute-binding protein (PhnD).

It is found in the cell membrane. The enzyme catalyses phosphonate(out) + ATP + H2O = phosphonate(in) + ADP + phosphate + H(+). Functionally, part of the ABC transporter complex PhnCDE involved in phosphonates import. Responsible for energy coupling to the transport system. The polypeptide is Phosphonates import ATP-binding protein PhnC (Lactobacillus delbrueckii subsp. bulgaricus (strain ATCC 11842 / DSM 20081 / BCRC 10696 / JCM 1002 / NBRC 13953 / NCIMB 11778 / NCTC 12712 / WDCM 00102 / Lb 14)).